Here is a 209-residue protein sequence, read N- to C-terminus: Guanylate kinase (209 aa).

Residues 9–188 (GIMLVISSPS…SVHQIKCIFT (180 aa)) form the Guanylate kinase-like domain. An ATP-binding site is contributed by 16 to 23 (SPSGGGKT).

The protein belongs to the guanylate kinase family.

It is found in the cytoplasm. It carries out the reaction GMP + ATP = GDP + ADP. Functionally, essential for recycling GMP and indirectly, cGMP. This is Guanylate kinase from Ehrlichia canis (strain Jake).